A 330-amino-acid polypeptide reads, in one-letter code: Olfactory receptor 5P73 (330 aa).

Over 1–28 the chain is Extracellular; the sequence is MAFLEDGNHTTVTEFFLLGLTDDPVLRD. A glycan (N-linked (GlcNAc...) asparagine) is linked at N8. The helical transmembrane segment at 29–49 threads the bilayer; sequence ILFIIILCIYLVTVSGNLSTI. The Cytoplasmic portion of the chain corresponds to 50–57; the sequence is LLIRVSSQ. Residues 58-78 form a helical membrane-spanning segment; that stretch reads LHHPMYFILSHLASVDIGISS. Residues 79–102 are Extracellular-facing; it reads SVTPNMLATFLVKQNTISYIGCSI. Residues C100 and C192 are joined by a disulfide bond. The chain crosses the membrane as a helical span at residues 103–123; it reads QFTSAAFFGTVECFLLATMAY. At 124 to 136 the chain is on the cytoplasmic side; sequence DRFVAICNPLLYS. The helical transmembrane segment at 137-157 threads the bilayer; sequence TKMSTEACIQLVVGSYIQGFL. The Extracellular portion of the chain corresponds to 158 to 199; that stretch reads NASFFTLSFFSLFFCGPNRINDFYCDFAPLLELSCSDVTVAV. Residues 200 to 220 traverse the membrane as a helical segment; sequence VITSISAGFITLTTVFVIAIS. Topologically, residues 221-240 are cytoplasmic; the sequence is YSCIFITIMKMHSTESRCKA. Residues 241–261 form a helical membrane-spanning segment; that stretch reads FSTCTSHLTAVILFYGTAIFI. Residues 262–274 are Extracellular-facing; the sequence is YVMPKSSYSTDQN. Residues 275–295 form a helical membrane-spanning segment; it reads KVLSIFYTVVIPMLNPLIYSL. Residues 296-330 are Cytoplasmic-facing; the sequence is RNNEIKEALKRHLGKKVFSYGNLFCKTHYNHNYPV.

The protein belongs to the G-protein coupled receptor 1 family.

The protein resides in the cell membrane. Potential odorant receptor. This is Olfactory receptor 5P73 from Mus musculus (Mouse).